The primary structure comprises 517 residues: 2,3-bisphosphoglycerate-independent phosphoglycerate mutase 1 (517 aa).

Residues aspartate 17 and serine 67 each coordinate Mn(2+). Serine 67 (phosphoserine intermediate) is an active-site residue. Substrate-binding positions include histidine 128, 158–159 (RD), arginine 190, arginine 196, 267–270 (RPDR), and lysine 340. Residues aspartate 407, histidine 411, aspartate 448, histidine 449, and histidine 467 each contribute to the Mn(2+) site.

It belongs to the BPG-independent phosphoglycerate mutase family. It depends on Mn(2+) as a cofactor.

The enzyme catalyses (2R)-2-phosphoglycerate = (2R)-3-phosphoglycerate. The protein operates within carbohydrate degradation; glycolysis; pyruvate from D-glyceraldehyde 3-phosphate: step 3/5. Catalyzes the interconversion of 2-phosphoglycerate and 3-phosphoglycerate. The sequence is that of 2,3-bisphosphoglycerate-independent phosphoglycerate mutase 1 from Methanosarcina barkeri (strain Fusaro / DSM 804).